The following is a 112-amino-acid chain: Protein lin-52 homolog (112 aa).

The protein belongs to the lin-52 family. Component of the DREAM complex. As to expression, expressed in the brain, liver and retina. Highly expressed in the retinal ganglion cell and inner nuclear layers at the parr stage. Expressed at a lower level in inner segments of some retinal photoreceptors.

In terms of biological role, may be involved in retinal development. In Oncorhynchus mykiss (Rainbow trout), this protein is Protein lin-52 homolog (lin52).